A 132-amino-acid polypeptide reads, in one-letter code: uncharacterized protein (132 aa).

2 consecutive transmembrane segments (helical) span residues 44-64 and 75-95; these read FMSFISFIVSCRLFILVFTFI and IAMIDAVVNALLILIVLAMLF.

The protein resides in the cytoplasm. The protein localises to the membrane. This is an uncharacterized protein from Schizosaccharomyces pombe (strain 972 / ATCC 24843) (Fission yeast).